The sequence spans 200 residues: Imidazoleglycerol-phosphate dehydratase (200 aa).

Belongs to the imidazoleglycerol-phosphate dehydratase family.

It is found in the cytoplasm. The catalysed reaction is D-erythro-1-(imidazol-4-yl)glycerol 3-phosphate = 3-(imidazol-4-yl)-2-oxopropyl phosphate + H2O. It participates in amino-acid biosynthesis; L-histidine biosynthesis; L-histidine from 5-phospho-alpha-D-ribose 1-diphosphate: step 6/9. This chain is Imidazoleglycerol-phosphate dehydratase, found in Bifidobacterium animalis subsp. lactis (strain AD011).